The chain runs to 400 residues: Probable vacuolar protease A (400 aa).

Positions 1-18 (MKGSLLLAGATLLGCTSA) are cleaved as a signal peptide. The propeptide at 19-72 (KLHSLKLKKVSLKEQLEHADIDVQIKSLGQKYMGIRPEQHEQQMFKEQTPIEVE) is activation peptide. Positions 87-397 (YFSEISIGTP…DLGKGTVGLA (311 aa)) constitute a Peptidase A1 domain. Aspartate 105 is an active-site residue. Residues cysteine 118 and cysteine 123 are joined by a disulfide bond. An N-linked (GlcNAc...) asparagine glycan is attached at asparagine 140. Aspartate 289 is a catalytic residue. Cysteine 323 and cysteine 356 are disulfide-bonded. The N-linked (GlcNAc...) asparagine glycan is linked to asparagine 340.

This sequence belongs to the peptidase A1 family.

It is found in the vacuole lumen. The protein localises to the secreted. It catalyses the reaction Hydrolysis of proteins with broad specificity for peptide bonds. Cleaves -Leu-Leu-|-Val-Tyr- bond in a synthetic substrate. Does not act on esters of Tyr or Arg.. Vacuolar aspartic endopeptidase which is probably also secreted and contributes to virulence. The chain is Probable vacuolar protease A (PEP2) from Arthroderma benhamiae (strain ATCC MYA-4681 / CBS 112371) (Trichophyton mentagrophytes).